The following is a 648-amino-acid chain: Threonine--tRNA ligase (648 aa).

A TGS domain is found at 1 to 61; it reads MIKITLPDGS…TTDGSLVLYT (61 aa). Residues 240–539 form a catalytic region; sequence DHRKLGKELE…LLEHTAGNFP (300 aa). Zn(2+) contacts are provided by Cys-335, His-386, and His-516.

This sequence belongs to the class-II aminoacyl-tRNA synthetase family. As to quaternary structure, homodimer. Zn(2+) serves as cofactor.

It localises to the cytoplasm. It carries out the reaction tRNA(Thr) + L-threonine + ATP = L-threonyl-tRNA(Thr) + AMP + diphosphate + H(+). Functionally, catalyzes the attachment of threonine to tRNA(Thr) in a two-step reaction: L-threonine is first activated by ATP to form Thr-AMP and then transferred to the acceptor end of tRNA(Thr). Also edits incorrectly charged L-seryl-tRNA(Thr). The sequence is that of Threonine--tRNA ligase from Flavobacterium psychrophilum (strain ATCC 49511 / DSM 21280 / CIP 103535 / JIP02/86).